Consider the following 180-residue polypeptide: MFPMVTGFMNYGQQAVRAARYIGQSFMITLSHANRLPVTIQYPYEKSITSERFRGRIHFEFDKCIACEVCVRVCPIDLPVVDWRFETDIRKKRLLNYSIDFGICIFCGNCVEYCPTNCLSMTEEYELSTYDRHELNYNQIALGRLPIPVVGDYTIQTIMNSNQTKIAMNKPLDSRTITNY.

4Fe-4S ferredoxin-type domains lie at 55–84 (GRIH…VDWR) and 95–124 (LNYS…MTEE). The [4Fe-4S] cluster site is built by C64, C67, C70, C74, C104, C107, C110, and C114.

The protein belongs to the complex I 23 kDa subunit family. In terms of assembly, NDH is composed of at least 16 different subunits, 5 of which are encoded in the nucleus. [4Fe-4S] cluster serves as cofactor.

It is found in the plastid. The protein localises to the chloroplast thylakoid membrane. It catalyses the reaction a plastoquinone + NADH + (n+1) H(+)(in) = a plastoquinol + NAD(+) + n H(+)(out). The enzyme catalyses a plastoquinone + NADPH + (n+1) H(+)(in) = a plastoquinol + NADP(+) + n H(+)(out). Functionally, NDH shuttles electrons from NAD(P)H:plastoquinone, via FMN and iron-sulfur (Fe-S) centers, to quinones in the photosynthetic chain and possibly in a chloroplast respiratory chain. The immediate electron acceptor for the enzyme in this species is believed to be plastoquinone. Couples the redox reaction to proton translocation, and thus conserves the redox energy in a proton gradient. In Amborella trichopoda, this protein is NAD(P)H-quinone oxidoreductase subunit I, chloroplastic.